Here is a 308-residue protein sequence, read N- to C-terminus: Tetraspanin-12 (308 aa).

At 1 to 41 the chain is on the cytoplasmic side; it reads MANRRQPVQHRAQQRVYRQSQIRYAPGAGGESEISCCVKYS. A helical membrane pass occupies residues 42–62; the sequence is VFSFNVIFFLLGFGLLLFGVW. Over 63 to 86 the chain is Extracellular; the sequence is AQIEKNTFVNMLSKASKLYLDPTW. A helical membrane pass occupies residues 87–107; the sequence is PLLIVGFLTFIIGFSGCVGSL. Residues 108 to 112 lie on the Cytoplasmic side of the membrane; it reads RENTS. Residues 113-133 form a helical membrane-spanning segment; sequence FLTFYSTLLGLLLIAEFSAGV. Residues 134-268 are Extracellular-facing; that stretch reads FAYACRDQLD…PKLQLWLNNN (135 aa). A glycan (N-linked (GlcNAc...) asparagine) is linked at Asn-213. Residues 269-289 form a helical membrane-spanning segment; it reads MLLVAVSMVIIAIIQVLGICF. The Cytoplasmic segment spans residues 290–308; it reads AQNLKSDILAQRAKWYYTH.

It belongs to the tetraspanin (TM4SF) family. In terms of assembly, may interact with protease sup-17; the interaction promotes sup-17 cell membrane localization. As to expression, expressed in the germline.

The protein localises to the cell membrane. It is found in the cytoplasmic vesicle membrane. It localises to the endosome membrane. Its subcellular location is the early endosome membrane. The protein resides in the late endosome membrane. The protein localises to the recycling endosome membrane. It is found in the golgi apparatus. It localises to the trans-Golgi network membrane. Functionally, functions redundantly with tsp-14 isoform a to regulate body size, embryonic and vulva development. Functions redundantly with tsp-14 (isoforms a and b) to regulate cell fate specification in the postembryonic mesodermal M lineage and male development. May regulate BMP-like Sma/Mab signaling by mediating protease sup-17 trafficking to the cell surface. Together with tsp-14, functions redundantly to maintain cell surface levels of the BMP type II receptor daf-4 (but not BMP type I receptor sma-6), probably by regulating endosomal sorting of receptors and their targeting to degradative lysosomes. Together with tsp-14 involved in maintaining the structural and functional integrity of the endosomal network. Together with tsp-14, probably acts by modulating the activation of glp-1, a Notch-like receptor, to regulate germline maturation. Probably acts by modulating the activation of lin-12, a Notch-like receptor, to regulate cell fate specification such as the anchor cell/ventral uterine precursor cell decision. This is Tetraspanin-12 from Caenorhabditis elegans.